The sequence spans 96 residues: UPF0125 protein YfjF (96 aa).

Belongs to the UPF0125 (RnfH) family.

This chain is UPF0125 protein YfjF (yfjF), found in Escherichia coli O157:H7.